Here is a 226-residue protein sequence, read N- to C-terminus: Putative ABC transporter ATP-binding protein BQ02700 (226 aa).

Residues 4-225 form the ABC transporter domain; the sequence is IKFDKVTQVF…VAIKEYIRRM (222 aa). 35 to 42 lines the ATP pocket; sequence GANGSGKS.

This sequence belongs to the ABC transporter superfamily.

It is found in the cell inner membrane. Probably part of an ABC transporter complex. Responsible for energy coupling to the transport system. The protein is Putative ABC transporter ATP-binding protein BQ02700 of Bartonella quintana (strain Toulouse) (Rochalimaea quintana).